Reading from the N-terminus, the 699-residue chain is SPX domain-containing membrane protein At4g22990 (699 aa).

The region spanning 2–145 (VAFGKKLKER…GYRFTNYYVK (144 aa)) is the SPX domain. The next 6 membrane-spanning stretches (helical) occupy residues 249 to 269 (FMSL…TYII), 280 to 300 (LGAA…AQLF), 317 to 337 (LIFS…AFDF), 339 to 358 (SIAV…ARAV), 377 to 397 (AGFV…AGLL), and 413 to 433 (LPGW…AISF). Acidic residues predominate over residues 475–490 (IEEQGEDECDGSEEAS). Residues 475–494 (IEEQGEDECDGSEEASEDSR) are disordered. The next 5 helical transmembrane spans lie at 515–535 (LLIY…SSVI), 546–566 (SVAI…LVVG), 578–598 (ILLV…HVVV), 606–626 (VCSG…NLSL), and 671–691 (MLLN…IVAT).

This sequence belongs to the major facilitator superfamily.

It localises to the membrane. This is SPX domain-containing membrane protein At4g22990 from Arabidopsis thaliana (Mouse-ear cress).